Reading from the N-terminus, the 141-residue chain is Large-conductance mechanosensitive channel (141 aa).

Helical transmembrane passes span 16–36 and 86–106; these read VIDL…VDSL and GNFI…FLMV.

Belongs to the MscL family. Homopentamer.

It is found in the cell inner membrane. Its function is as follows. Channel that opens in response to stretch forces in the membrane lipid bilayer. May participate in the regulation of osmotic pressure changes within the cell. This Ralstonia nicotianae (strain ATCC BAA-1114 / GMI1000) (Ralstonia solanacearum) protein is Large-conductance mechanosensitive channel.